The following is a 125-amino-acid chain: MGLTGTTLVLVCVAFFGSAAAHNCQNGTRPASEENREGCDYYCWNAETKSWDQFFFGNGERCFYNTGEKGTCLNGECHLTTSSGGPDDTGDNTPPPTEKPKQKKKKPKKTKKPKRKSKKDQKENF.

The first 21 residues, 1–21 (MGLTGTTLVLVCVAFFGSAAA), serve as a signal peptide directing secretion. A glycan (N-linked (GlcNAc...) asparagine) is linked at Asn26. The disordered stretch occupies residues 81 to 125 (TSSGGPDDTGDNTPPPTEKPKQKKKKPKKTKKPKRKSKKDQKENF). The segment covering 101–119 (KQKKKKPKKTKKPKRKSKK) has biased composition (basic residues).

The protein belongs to the salp14 family. In terms of assembly, homodimer. Interacts with host PLG. Interacts with host PLAT. Saliva (at protein level).

Its subcellular location is the secreted. Its function is as follows. Salivary protein that promotes host fibrinolysis via accelerating host plasmin generation from plasminogen (PLG) initiated by tPA/tissue-type plasminogen activator (PLAT). Does not affect urokinase (PLAU)-mediated fibrinolysis in the host. Enhances amidolytic activity of host coagulation factor Xa (F10). The polypeptide is Ixonnexin (Ixodes scapularis (Black-legged tick)).